The chain runs to 434 residues: SARSAAAEERSVNSSTMVAQQKNLEGYVGFANLPNQVYRKSVKRGFEFTLMVVGESGLGKSTLINSLFLTDLYSPEYPGPSHRIKKTVQVEQSKVLIKEGGVQLLLTIVDTPGFGDAVDNSNCWQPVIDYIDSKFEDYLNAESRVNRRQMPDNRVQCCLYFIAPSGHGLKPLDIEFMKRLHEKVNIIPLIAKADTLTPEECQQFKKQIMKEIQEHKIKIYEFPETDDEEENKLVKKIKDRLPLAVVGSNTIIEVNGKRVRGRQYPWGVAEVENGEHCDFTILRNMLIRTHMQDLKDVTNNVHYENYRSRKLAAVTYNGVDNNKNKGQLTKSPLAQMEEERREHVAKMKKMEMEMEQVFEMKVKEKVQKLKDSEAELQRRHEQMKKNLEAQHKGLEEKRRQFEDEKANWEAQQRILEQQNSSRTLEKNKKKGKIF.

Position 27 is a phosphotyrosine (Y27). The Septin-type G domain maps to 44-313 (RGFEFTLMVV…ENYRSRKLAA (270 aa)). The tract at residues 44-314 (RGFEFTLMVV…NYRSRKLAAV (271 aa)) is interaction with SEPTIN12. The interval 54-61 (GESGLGKS) is G1 motif. 54–61 (GESGLGKS) lines the GTP pocket. The residue at position 74 (S74) is a Phosphoserine. Residues T87, G113, and 192 to 200 (KADTLTPEE) each bind GTP. The tract at residues 110–113 (DTPG) is G3 motif. Positions 191-194 (AKAD) are G4 motif. Position 225 is a phosphothreonine (T225). GTP contacts are provided by G247 and R262. Positions 329 to 434 (TKSPLAQMEE…EKNKKKGKIF (106 aa)) form a coiled coil. Phosphoserine is present on S331. An N6-acetyllysine modification is found at K370. Over residues 377 to 407 (QRRHEQMKKNLEAQHKGLEEKRRQFEDEKAN) the composition is skewed to basic and acidic residues. Positions 377–434 (QRRHEQMKKNLEAQHKGLEEKRRQFEDEKANWEAQQRILEQQNSSRTLEKNKKKGKIF) are disordered. S421 is modified (phosphoserine). T423 carries the phosphothreonine modification.

The protein belongs to the TRAFAC class TrmE-Era-EngA-EngB-Septin-like GTPase superfamily. Septin GTPase family. Septins polymerize into heterooligomeric protein complexes that form filaments, and associate with cellular membranes, actin filaments and microtubules. GTPase activity is required for filament formation. Filaments are assembled from asymmetrical heterotrimers, composed of SEPTIN2, SEPTIN6 and SEPTIN7 that associate head-to-head to form a hexameric unit. Within the trimer, directly interacts with SEPTIN6, while interaction with SEPTIN2 seems indirect. In the absence of SEPTIN6, forms homodimers. Interacts directly with CENPE and links CENPE to septin filaments composed of SEPTIN2, SEPTIN6 and SEPTIN7. Interacts with SEPTIN5, SEPTIN8, SEPTIN9 and SEPTIN11. Component of a septin core octameric complex consisting of SEPTIN12, SEPTIN7, SEPTIN6 and SEPTIN2 or SEPTIN4 in the order 12-7-6-2-2-6-7-12 or 12-7-6-4-4-6-7-12 and located in the sperm annulus; the SEPTIN12:SEPTIN7 association is mediated by the respective GTP-binding domains.

It localises to the cytoplasm. The protein localises to the chromosome. It is found in the centromere. The protein resides in the kinetochore. Its subcellular location is the cytoskeleton. It localises to the spindle. The protein localises to the cleavage furrow. It is found in the midbody. The protein resides in the cilium axoneme. Its subcellular location is the cell projection. It localises to the cilium. The protein localises to the flagellum. In terms of biological role, filament-forming cytoskeletal GTPase. Required for normal organization of the actin cytoskeleton. Required for normal progress through mitosis. Involved in cytokinesis. Required for normal association of CENPE with the kinetochore. Plays a role in ciliogenesis and collective cell movements. Forms a filamentous structure with SEPTIN12, SEPTIN6, SEPTIN2 and probably SEPTIN4 at the sperm annulus which is required for the structural integrity and motility of the sperm tail during postmeiotic differentiation. This Pan troglodytes (Chimpanzee) protein is Septin-7.